The chain runs to 394 residues: MPPKASKKDAAPAERPILGRFSSHLKIGIVGLPNVGKSTFFNIVTKLSIPAENFPFCTIDPNEARVYVPDERFDWLCQLYKPKSEVSAYLEINDIAGLVRGAHAGEGLGNAFLSHIRAVDGIFHVLRAFEDKEVTHIDDSVDPVRDLETIGEELRLKDIEFVQNKIDDLEKSMKRSNDKQLKLEHELCEKVKAHLEDGKDVRFGDWKSADIEILNTFQLLTAKPVVYLVNMSEKDYQRKKNKFLPKIHAWVQEHGGETIIPFSCAFERLLADMPPDEAAKYCAENQIASVIPKIIKTGFAAIHLIYFFTAGPDEVKCWQIRRQTKAPQAAGTIHTDFERGFICAEVMKFDDLKELGSESAVKAAGKYRQEGKTYVVQDGDIIFFKFNVSGGGKK.

The OBG-type G domain maps to 25–282 (LKIGIVGLPN…MPPDEAAKYC (258 aa)). Residues 34-39 (NVGKST), 56-60 (FCTID), and 94-97 (DIAG) contribute to the ATP site. 34-39 (NVGKST) lines the GTP pocket. Residues Ser-38 and Thr-58 each contribute to the Mg(2+) site. 2 residues coordinate GTP: Phe-129 and Asn-230. Residues 230-231 (NM), Met-231, and 263-265 (SCA) contribute to the ATP site. 263 to 265 (SCA) lines the GTP pocket. One can recognise a TGS domain in the interval 303–386 (HLIYFFTAGP…QDGDIIFFKF (84 aa)).

The protein belongs to the TRAFAC class OBG-HflX-like GTPase superfamily. OBG GTPase family. YchF/OLA1 subfamily. In terms of assembly, monomer (Potential). Interacts with GAP1. Requires Mg(2+) as cofactor.

It localises to the cell membrane. The protein localises to the cytoplasm. It is found in the cytosol. Activated by GAP1. Hydrolyzes ATP, and can also hydrolyze GTP with lower efficiency. Has lower affinity for GTP (Potential). Exhibits GTPase activity. Exhibits similar binding affinities and hydrolytic activities toward both GTP and ATP. Binds to the 26 S ribosomal RNA in vitro, but not to the 5.8 S or 18 S rRNA. Confers sensitivity to salinity stress by suppressing the anti-oxidation enzymatic activities and increasing lipid peroxidation thus leading to the accumulation of reactive oxygen species (ROS). The sequence is that of Obg-like ATPase 1 from Oryza sativa subsp. japonica (Rice).